The following is a 381-amino-acid chain: DNA replication and repair protein RecF (381 aa).

30 to 37 contributes to the ATP binding site; sequence GENAQGKT.

The protein belongs to the RecF family.

The protein localises to the cytoplasm. Its function is as follows. The RecF protein is involved in DNA metabolism; it is required for DNA replication and normal SOS inducibility. RecF binds preferentially to single-stranded, linear DNA. It also seems to bind ATP. In Lactobacillus delbrueckii subsp. bulgaricus (strain ATCC 11842 / DSM 20081 / BCRC 10696 / JCM 1002 / NBRC 13953 / NCIMB 11778 / NCTC 12712 / WDCM 00102 / Lb 14), this protein is DNA replication and repair protein RecF.